The sequence spans 927 residues: 2-oxoadipate dehydrogenase complex component E1 (927 aa).

It belongs to the alpha-ketoglutarate dehydrogenase family. The 2-oxoadipate dehydrogenase complex is composed of OADH (2-oxoadipate dehydrogenase; E1a), DLST (dihydrolipoamide succinyltransferase; E2) and DLD (dihydrolipoamide dehydrogenase; E3). E1a functional unit is a dimer. The cofactor is thiamine diphosphate.

It localises to the mitochondrion. The catalysed reaction is N(6)-[(R)-lipoyl]-L-lysyl-[protein] + 2-oxoadipate + H(+) = N(6)-[(R)-S(8)-glutaryldihydrolipoyl]-L-lysyl-[protein] + CO2. It participates in amino-acid degradation. In terms of biological role, 2-oxoadipate dehydrogenase (E1a) component of the 2-oxoadipate dehydrogenase complex (OADHC). Participates in the first step, rate limiting for the overall conversion of 2-oxoadipate (alpha-ketoadipate) to glutaryl-CoA and CO(2) catalyzed by the whole OADHC. Catalyzes the irreversible decarboxylation of 2-oxoadipate via the thiamine diphosphate (ThDP) cofactor and subsequent transfer of the decarboxylated acyl intermediate on an oxidized dihydrolipoyl group that is covalently amidated to the E2 enzyme (dihydrolipoyllysine-residue succinyltransferase or DLST). Can catalyze the decarboxylation of 2-oxoglutarate in vitro, but at a much lower rate than 2-oxoadipate. Responsible for the last step of L-lysine, L-hydroxylysine and L-tryptophan catabolism with the common product being 2-oxoadipate. In Xenopus laevis (African clawed frog), this protein is 2-oxoadipate dehydrogenase complex component E1 (dhtkd1).